The sequence spans 791 residues: MKLKVSIGCDAQHTQIAWVNYEGRPTEVDGPLWVGRILVRVRDFDGFTPDGSPPKRDSEYFRGRSRKFQIQAEGRFKKEYNGDQVIYGTQFDHMISTFPESAFRAGMRIAKYIDPAVYYDKYARSPYIMSPFVACVNTLSAWPAPSRLEDAVISLVEADSQESDTESLPEINDSSDVSLSDLPSTNVTPKKTTTQIDVQTNIVTPPITVTAVPDSPNPPAATPATVADNDDLSIVSSDSGNTTAPRKNRHRYWSFAGFSDSTRFSHLNVPAAIPDAPSVKTETSQNVSQLSVKSAATSLAPVEDDEDDELLLHRHITNKHKDFNLHVKQLGLLHKPSLDLEEGYIMDENYGKDVYKHGISNVPDDENEDDLQRYFTALEMQQDQKEQHKKSKNKDPFRKITHPSLHLGKFSTPKLIKRMSLRSKKSLRNDSKSDDVGNSTHRFSTASAASTSAVKTEKEKKMSAPRRSLDKLIRIGSLHRHHHHHHKTDLIESDSGIEASESNRRKSDIFSFSGRNSFSVSRPSSSHSTLSYANDSASSAVNVAGETGSLPPLREQTSITSGVPPSNRLKKHVSTPEKIVEERSIDEVSQSNTPSSKQLPQSVDGKTVTANANSTTVAKQPTSNVALTRPKPVRTATSQSKIPKPVKHIPSDSNNLDPQLGPWRFANPKVDPIEDNSFIFGEHKSVKERRKYFSSSKFCRENFFYDKDVVYCMSFFSPHMDFNTFNLNIGPIRLNVYKHLNSDGHQPIRYMMRETDDEDAVMFVVEFDLLEDDDETVLAEQAKERERRKQT.

The disordered stretch occupies residues 158–189 (ADSQESDTESLPEINDSSDVSLSDLPSTNVTP). Low complexity predominate over residues 174–184 (SSDVSLSDLPS). Positions 373-379 (RYFTALE) match the FFAT motif. Tyr374 is subject to Phosphotyrosine. At Thr376 the chain carries Phosphothreonine. 3 disordered regions span residues 381–505 (QQDQ…SNRR), 542–606 (NVAG…VDGK), and 630–658 (PKPV…NLDP). Residues 415–426 (LIKRMSLRSKKS) show a composition bias toward basic residues. The segment covering 444-453 (STASAASTSA) has biased composition (low complexity). A compositionally biased stretch (basic and acidic residues) spans 455 to 473 (KTEKEKKMSAPRRSLDKLI). Phosphoserine occurs at positions 477 and 493. Positions 477–487 (SLHRHHHHHHK) are enriched in basic residues. Residues 555–564 (EQTSITSGVP) are compositionally biased toward polar residues. The residue at position 574 (Ser574) is a Phosphoserine. Positions 574–586 (STPEKIVEERSID) are enriched in basic and acidic residues. The span at 587–601 (EVSQSNTPSSKQLPQ) shows a compositional bias: polar residues.

Belongs to the UPF0590 family. In terms of assembly, interacts (via FFAT-motif) with scs2 (via MSP domain); the interaction is direct and serves to restrict the localization of duc1 to areas of cell membrane-endoplasmic reticulum contact sites, and away from the cell division site.

It is found in the cell membrane. Its function is as follows. Promotes the proper distribution of phosphatidylinositol 4,5-bisphosphate (PtdIns(4,5)P2/PIP2) synthesis at the cell membrane. May bind phosphatidylinositol 4,5-bisphosphate (PtdIns(4,5)P2/PIP2) and is required for robust anchoring of the contractile ring to the cell membrane. The polypeptide is DUF1769 family protein duc1 (Schizosaccharomyces pombe (strain 972 / ATCC 24843) (Fission yeast)).